Reading from the N-terminus, the 680-residue chain is tRNA 5-methylaminomethyl-2-thiouridine biosynthesis bifunctional protein MnmC (680 aa).

The interval Met1 to Thr251 is tRNA (mnm(5)s(2)U34)-methyltransferase. An FAD-dependent cmnm(5)s(2)U34 oxidoreductase region spans residues Ile277 to Ile680.

In the N-terminal section; belongs to the methyltransferase superfamily. tRNA (mnm(5)s(2)U34)-methyltransferase family. The protein in the C-terminal section; belongs to the DAO family. It depends on FAD as a cofactor.

It localises to the cytoplasm. It carries out the reaction 5-aminomethyl-2-thiouridine(34) in tRNA + S-adenosyl-L-methionine = 5-methylaminomethyl-2-thiouridine(34) in tRNA + S-adenosyl-L-homocysteine + H(+). In terms of biological role, catalyzes the last two steps in the biosynthesis of 5-methylaminomethyl-2-thiouridine (mnm(5)s(2)U) at the wobble position (U34) in tRNA. Catalyzes the FAD-dependent demodification of cmnm(5)s(2)U34 to nm(5)s(2)U34, followed by the transfer of a methyl group from S-adenosyl-L-methionine to nm(5)s(2)U34, to form mnm(5)s(2)U34. The protein is tRNA 5-methylaminomethyl-2-thiouridine biosynthesis bifunctional protein MnmC of Aliivibrio fischeri (strain ATCC 700601 / ES114) (Vibrio fischeri).